Here is a 250-residue protein sequence, read N- to C-terminus: tRNA (guanine-N(1)-)-methyltransferase (250 aa).

Residues Gly-116 and Ile-136 to Leu-141 contribute to the S-adenosyl-L-methionine site.

The protein belongs to the RNA methyltransferase TrmD family. In terms of assembly, homodimer.

It localises to the cytoplasm. The catalysed reaction is guanosine(37) in tRNA + S-adenosyl-L-methionine = N(1)-methylguanosine(37) in tRNA + S-adenosyl-L-homocysteine + H(+). Specifically methylates guanosine-37 in various tRNAs. In Pseudomonas putida (strain GB-1), this protein is tRNA (guanine-N(1)-)-methyltransferase.